Consider the following 260-residue polypeptide: Winged helix repair factor 1 (260 aa).

Winged helix domain regions lie at residues 38–110 (FTED…MVVM), 126–185 (SRAT…LAVP), and 186–260 (GAGR…ISET).

The protein belongs to the STK19 family. In terms of assembly, monomer in solution. Homodimer; when bound to DNA. Component of a transcription-coupled nucleotide excision repair (TC-NER) complex which assembles and interacts with the multiprotein RNA polymerase II complex when it stalls at DNA lesions.

The protein resides in the nucleus. Its function is as follows. DNA-binding protein which is required for efficient transcription-coupled nucleotide excision repair (TC-NER). Acts as part of a TC-NER complex which assembles and interacts with RNA polymerase II (RNAPII) when it stalls at DNA lesions. This is Winged helix repair factor 1 from Xenopus laevis (African clawed frog).